We begin with the raw amino-acid sequence, 310 residues long: Tyrosine recombinase XerC (310 aa).

In terms of domain architecture, Core-binding (CB) spans N11 to V97. The Tyr recombinase domain maps to P118–D298. Active-site residues include R157, K181, H250, R253, and H276. Y285 functions as the O-(3'-phospho-DNA)-tyrosine intermediate in the catalytic mechanism.

Belongs to the 'phage' integrase family. XerC subfamily. In terms of assembly, forms a cyclic heterotetrameric complex composed of two molecules of XerC and two molecules of XerD.

It localises to the cytoplasm. Site-specific tyrosine recombinase, which acts by catalyzing the cutting and rejoining of the recombining DNA molecules. The XerC-XerD complex is essential to convert dimers of the bacterial chromosome into monomers to permit their segregation at cell division. It also contributes to the segregational stability of plasmids. The polypeptide is Tyrosine recombinase XerC (Vibrio atlanticus (strain LGP32) (Vibrio splendidus (strain Mel32))).